The following is a 343-amino-acid chain: Transcription factor BPE (343 aa).

The bHLH domain maps to 142–192; the sequence is QATDSHSLAERARREKISERMKILQDLVPGCNKVIGKALVLDEIINYIQSL.

Homodimer. In terms of tissue distribution, specifically expressed in flowers, mostly in petals, inflorescence and flower buds. Expressed ubiquitously (leaves, flowers and stems).

The protein localises to the nucleus. In terms of biological role, involved in the control of petal size, by interfering with postmitotic cell expansion to limit final petal cell size. This Arabidopsis thaliana (Mouse-ear cress) protein is Transcription factor BPE (BPE).